The following is a 174-amino-acid chain: Stigma-specific STIG1-like protein 4 (174 aa).

The signal sequence occupies residues 1–25 (MMSIKLTLCALIFFLLNSLLHHVLG). Positions 140–174 (PSSQPGKRHRRHKFHRPRPPPSPDSKLNYDDHDDE) are disordered. Basic residues predominate over residues 145-157 (GKRHRRHKFHRPR).

The protein belongs to the STIG1 family.

It is found in the secreted. In terms of biological role, endosperm-specific cysteine-rich protein that acts downstream of BHLH95/ZOU to modify the interface between embryo and endosperm and mediate the separation of these two tissues during seed development. Necessary for the biogenesis of the embryo sheath, an extracuticular endosperm-derived structure at the surface of the embryo. Required for the separation of embryo and endosperm, and for normal progression of the embryo through the endosperm tissue. Required for the formation of a normal embryonic cuticle. This chain is Stigma-specific STIG1-like protein 4, found in Arabidopsis thaliana (Mouse-ear cress).